The primary structure comprises 234 residues: Large ribosomal subunit protein uL1 (234 aa).

This sequence belongs to the universal ribosomal protein uL1 family. As to quaternary structure, part of the 50S ribosomal subunit.

In terms of biological role, binds directly to 23S rRNA. The L1 stalk is quite mobile in the ribosome, and is involved in E site tRNA release. Its function is as follows. Protein L1 is also a translational repressor protein, it controls the translation of the L11 operon by binding to its mRNA. This chain is Large ribosomal subunit protein uL1, found in Pectobacterium atrosepticum (strain SCRI 1043 / ATCC BAA-672) (Erwinia carotovora subsp. atroseptica).